Reading from the N-terminus, the 158-residue chain is 2-C-methyl-D-erythritol 2,4-cyclodiphosphate synthase (158 aa).

A divalent metal cation is bound by residues Asp9 and His11. Residues 9-11 and 35-36 each bind 4-CDP-2-C-methyl-D-erythritol 2-phosphate; these read DVH and HS. His43 provides a ligand contact to a divalent metal cation. Residues 57-59, 62-66, 101-107, 133-136, Phe140, and Arg143 each bind 4-CDP-2-C-methyl-D-erythritol 2-phosphate; these read DIG, FPDTD, AQRPKMA, and TTTE.

The protein belongs to the IspF family. In terms of assembly, homotrimer. A divalent metal cation is required as a cofactor.

It catalyses the reaction 4-CDP-2-C-methyl-D-erythritol 2-phosphate = 2-C-methyl-D-erythritol 2,4-cyclic diphosphate + CMP. The protein operates within isoprenoid biosynthesis; isopentenyl diphosphate biosynthesis via DXP pathway; isopentenyl diphosphate from 1-deoxy-D-xylulose 5-phosphate: step 4/6. Involved in the biosynthesis of isopentenyl diphosphate (IPP) and dimethylallyl diphosphate (DMAPP), two major building blocks of isoprenoid compounds. Catalyzes the conversion of 4-diphosphocytidyl-2-C-methyl-D-erythritol 2-phosphate (CDP-ME2P) to 2-C-methyl-D-erythritol 2,4-cyclodiphosphate (ME-CPP) with a corresponding release of cytidine 5-monophosphate (CMP). This is 2-C-methyl-D-erythritol 2,4-cyclodiphosphate synthase from Lysinibacillus sphaericus (strain C3-41).